A 455-amino-acid chain; its full sequence is Argininosuccinate lyase (455 aa).

This sequence belongs to the lyase 1 family. Argininosuccinate lyase subfamily.

It localises to the cytoplasm. The catalysed reaction is 2-(N(omega)-L-arginino)succinate = fumarate + L-arginine. It participates in amino-acid biosynthesis; L-arginine biosynthesis; L-arginine from L-ornithine and carbamoyl phosphate: step 3/3. The chain is Argininosuccinate lyase from Shewanella baltica (strain OS223).